The sequence spans 146 residues: Putative ankyrin repeat protein FPV224 (146 aa).

ANK repeat units follow at residues 9–38, 42–79, 94–126, and 127–145; these read SLSTPLHHAINLLKTDIVSLLMQYKADASI, KGITPFCYAMYLGYYGVNKDILNIITRYNSINGTTRDI, YVFVNLHDAARLGYVYILKKIIYNGKNINRIDE, and YYYSALHYAVKSSNLKAVN.

The chain is Putative ankyrin repeat protein FPV224 from Fowlpox virus (strain NVSL) (FPV).